The chain runs to 535 residues: Beta-amylase (535 aa).

Residues 1 to 2 (ME) constitute a propeptide, removed in mature form. At V3 the chain carries N-acetylvaline. 3 residues coordinate substrate: D51, H91, and D99. The Proton donor role is filled by E184. The substrate site is built by K293, H298, and T340. Residue E378 is the Proton acceptor of the active site. Substrate-binding positions include 379-380 (NA) and R418. 3 tandem repeats follow at residues 489 to 499 (GPTGGMGGQAE), 500 to 510 (GPTCGMGGQVK), and 511 to 521 (GPTGGMGGQAE). The tract at residues 489 to 532 (GPTGGMGGQAEGPTCGMGGQVKGPTGGMGGQAEDPTSGMGGELP) is 4 X 11 AA tandem repeats. The propeptide at 490 to 535 (PTGGMGGQAEGPTCGMGGQVKGPTGGMGGQAEDPTSGMGGELPATM) is removed in mature form. Positions 513 to 535 (TGGMGGQAEDPTSGMGGELPATM) are disordered. The 4; approximate repeat unit spans residues 522–532 (DPTSGMGGELP).

It belongs to the glycosyl hydrolase 14 family. As to quaternary structure, monomer. In terms of tissue distribution, endosperm.

The enzyme catalyses Hydrolysis of (1-&gt;4)-alpha-D-glucosidic linkages in polysaccharides so as to remove successive maltose units from the non-reducing ends of the chains.. Functionally, catalyzes the liberation of maltose from 1,4-alpha-D glucans. This Hordeum vulgare subsp. spontaneum (Wild barley) protein is Beta-amylase.